A 940-amino-acid polypeptide reads, in one-letter code: Isoleucine--tRNA ligase (940 aa).

Positions 58–68 (PYANGNIHIGH) match the 'HIGH' region motif. Residue E563 coordinates L-isoleucyl-5'-AMP. Residues 604–608 (KMSKS) carry the 'KMSKS' region motif. K607 serves as a coordination point for ATP. Zn(2+)-binding residues include C903, C906, C923, and C926.

Belongs to the class-I aminoacyl-tRNA synthetase family. IleS type 1 subfamily. In terms of assembly, monomer. Zn(2+) serves as cofactor.

It localises to the cytoplasm. It carries out the reaction tRNA(Ile) + L-isoleucine + ATP = L-isoleucyl-tRNA(Ile) + AMP + diphosphate. Its function is as follows. Catalyzes the attachment of isoleucine to tRNA(Ile). As IleRS can inadvertently accommodate and process structurally similar amino acids such as valine, to avoid such errors it has two additional distinct tRNA(Ile)-dependent editing activities. One activity is designated as 'pretransfer' editing and involves the hydrolysis of activated Val-AMP. The other activity is designated 'posttransfer' editing and involves deacylation of mischarged Val-tRNA(Ile). The protein is Isoleucine--tRNA ligase of Buchnera aphidicola subsp. Acyrthosiphon pisum (strain APS) (Acyrthosiphon pisum symbiotic bacterium).